The chain runs to 384 residues: D-galactosamine-6-phosphate deaminase AgaS (384 aa).

SIS domains follow at residues 45–197 (LEPL…SQTF) and 215–364 (SEGV…PDTP).

The protein belongs to the SIS family. AgaS subfamily.

It carries out the reaction D-galactosamine 6-phosphate + H2O = D-tagatopyranose 1-phosphate + NH4(+). In terms of biological role, catalyzes the isomerization-deamination of galactosamine 6-phosphate to form tagatofuranose 6-phosphate and ammonium ion. The sequence is that of D-galactosamine-6-phosphate deaminase AgaS from Escherichia coli.